Consider the following 355-residue polypeptide: Lamassu protein LmuA (355 aa).

Its function is as follows. Component of antiviral defense system Lamassu type II, composed of LmuA and LmuB. Expression of Lamassu type II in B.subtilis (strain BEST7003) confers resistance to phage SpBeta. May be a nuclease. The protein is Lamassu protein LmuA of Bacillus cereus (strain VD014).